The primary structure comprises 318 residues: DNA-directed RNA polymerase subunit alpha 2 (318 aa).

An alpha N-terminal domain (alpha-NTD) region spans residues 1-227 (MALENLLHPT…NQLRNIVDIE (227 aa)). The tract at residues 242 to 318 (INPILLKHVE…TLIENWPQDL (77 aa)) is alpha C-terminal domain (alpha-CTD).

The protein belongs to the RNA polymerase alpha chain family. Homodimer. The RNAP catalytic core consists of 2 alpha, 1 beta, 1 beta' and 1 omega subunit. When a sigma factor is associated with the core the holoenzyme is formed, which can initiate transcription.

It carries out the reaction RNA(n) + a ribonucleoside 5'-triphosphate = RNA(n+1) + diphosphate. DNA-dependent RNA polymerase catalyzes the transcription of DNA into RNA using the four ribonucleoside triphosphates as substrates. In Francisella tularensis subsp. novicida (strain U112), this protein is DNA-directed RNA polymerase subunit alpha 2.